A 64-amino-acid chain; its full sequence is Large ribosomal subunit protein bL35 (64 aa).

The protein belongs to the bacterial ribosomal protein bL35 family.

The protein is Large ribosomal subunit protein bL35 of Kineococcus radiotolerans (strain ATCC BAA-149 / DSM 14245 / SRS30216).